The primary structure comprises 142 residues: ATP synthase epsilon chain (142 aa).

This sequence belongs to the ATPase epsilon chain family. In terms of assembly, F-type ATPases have 2 components, CF(1) - the catalytic core - and CF(0) - the membrane proton channel. CF(1) has five subunits: alpha(3), beta(3), gamma(1), delta(1), epsilon(1). CF(0) has three main subunits: a, b and c.

The protein resides in the cell inner membrane. Produces ATP from ADP in the presence of a proton gradient across the membrane. The sequence is that of ATP synthase epsilon chain from Maridesulfovibrio salexigens (strain ATCC 14822 / DSM 2638 / NCIMB 8403 / VKM B-1763) (Desulfovibrio salexigens).